A 142-amino-acid chain; its full sequence is Probable transport accessory protein MmpS5 (142 aa).

The chain crosses the membrane as a helical span at residues arginine 7–glutamine 26.

This sequence belongs to the MmpS family.

The protein localises to the cell membrane. The chain is Probable transport accessory protein MmpS5 (mmpS5) from Mycobacterium bovis (strain ATCC BAA-935 / AF2122/97).